A 490-amino-acid chain; its full sequence is V-type proton ATPase subunit B (490 aa).

Arg-380 is a binding site for ATP.

It belongs to the ATPase alpha/beta chains family. As to quaternary structure, V-ATPase is a heteromultimeric enzyme made up of two complexes: the ATP-hydrolytic V1 complex and the proton translocation V0 complex. The V1 complex consists of three catalytic AB heterodimers that form a heterohexamer, three peripheral stalks each consisting of EG heterodimers, one central rotor including subunits D and F, and the regulatory subunits C and H. The proton translocation complex V0 consists of the proton transport subunit a, a ring of proteolipid subunits c9c'', rotary subunit d, subunits e and f, and the accessory subunits VhaAC45 and ATP6AP2. In terms of tissue distribution, expressed in Malpighian tubules, rectum, antennal palps and oviduct.

Its function is as follows. Non-catalytic subunit of the V1 complex of vacuolar(H+)-ATPase (V-ATPase), a multisubunit enzyme composed of a peripheral complex (V1) that hydrolyzes ATP and a membrane integral complex (V0) that translocates protons. V-ATPase is responsible for acidifying and maintaining the pH of intracellular compartments and in some cell types, is targeted to the plasma membrane, where it is responsible for acidifying the extracellular environment. Essential for the proper assembly and activity of V-ATPase. This Drosophila melanogaster (Fruit fly) protein is V-type proton ATPase subunit B (Vha55).